Consider the following 777-residue polypeptide: Cullin-3 (777 aa).

The tract at residues 568–596 (YPPPKASMSNEENGPGPSSSGESMKERKP) is disordered. Over residues 576-589 (SNEENGPGPSSSGE) the composition is skewed to low complexity. A Cullin neddylation domain is found at 707–769 (DRKLEVEAAI…REYLARDEHD (63 aa)). Lys-721 is covalently cross-linked (Glycyl lysine isopeptide (Lys-Gly) (interchain with G-Cter in NEDD8)).

The protein belongs to the cullin family. As to quaternary structure, probable component of multiple cullin-RING-based BCB (BTB-CUL3-BTB) E3 ubiquitin-protein ligase complexes formed by cul-3, rbx-1 and a variable BTB domain-containing protein acting as both, adapter to cullin and substrate recognition component. Interacts with bath-15, bath-40, bath-41, bath-42, C17F4.8, tag-303, D2045.8, F57C2.1, ZC239.15 and B0281.5. Interacts with mel-26 (via BTB domain). Interacts with dcn-1. In terms of processing, neddylated. Deneddylated via its interaction with the COP9 signalosome (CSN) complex.

The protein resides in the cytoplasm. The protein localises to the nucleus. The protein operates within protein modification; protein ubiquitination. Functionally, probable core component of multiple cullin-RING-based BCB (BTB-CUL3-BTB) E3 ubiquitin-protein ligase complexes which mediate the ubiquitination and subsequent proteasomal degradation of target proteins. Probably acts as a scaffold protein which may contribute to catalysis through positioning of the substrate and the ubiquitin-conjugating enzyme. Required to target mei-3/katanin for degradation at the meiosis to mitosis transition via its neddylation and deneddylation. Functions in ubiquitin-mediated degradation of CKIs to target cki-1 for degradation. Regulates microtubule stability in the early embryo. In body wall muscles, involved in the organization of myosin thick filaments, likely by regulating the degradation of microtubule severing protein mei-1 downstream of unc-89. Together with spop-1, may promote the ubiquitination and proteasomal degradation of target bromodomain-containing proteins such as bet-1. This is Cullin-3 from Caenorhabditis elegans.